Consider the following 347-residue polypeptide: Protein RecA (347 aa).

Residue 65 to 72 participates in ATP binding; it reads GPESSGKT.

The protein belongs to the RecA family.

It localises to the cytoplasm. Functionally, can catalyze the hydrolysis of ATP in the presence of single-stranded DNA, the ATP-dependent uptake of single-stranded DNA by duplex DNA, and the ATP-dependent hybridization of homologous single-stranded DNAs. It interacts with LexA causing its activation and leading to its autocatalytic cleavage. This is Protein RecA from Aliivibrio salmonicida (strain LFI1238) (Vibrio salmonicida (strain LFI1238)).